Here is a 439-residue protein sequence, read N- to C-terminus: Ribosomal protein uS12 methylthiotransferase RimO (439 aa).

In terms of domain architecture, MTTase N-terminal spans 1–117 (MNIGFISLGC…IAGVVNRIAQ (117 aa)). [4Fe-4S] cluster contacts are provided by Cys10, Cys46, Cys80, Cys154, Cys158, and Cys161. The Radical SAM core domain occupies 140-370 (TTPPGSAYLK…LRLQQKITRQ (231 aa)). Residues 373 to 439 (LARINTQEKV…RNYDMIGEYQ (67 aa)) enclose the TRAM domain.

This sequence belongs to the methylthiotransferase family. RimO subfamily. It depends on [4Fe-4S] cluster as a cofactor.

It localises to the cytoplasm. It catalyses the reaction L-aspartate(89)-[ribosomal protein uS12]-hydrogen + (sulfur carrier)-SH + AH2 + 2 S-adenosyl-L-methionine = 3-methylsulfanyl-L-aspartate(89)-[ribosomal protein uS12]-hydrogen + (sulfur carrier)-H + 5'-deoxyadenosine + L-methionine + A + S-adenosyl-L-homocysteine + 2 H(+). Its function is as follows. Catalyzes the methylthiolation of an aspartic acid residue of ribosomal protein uS12. This chain is Ribosomal protein uS12 methylthiotransferase RimO, found in Syntrophomonas wolfei subsp. wolfei (strain DSM 2245B / Goettingen).